A 513-amino-acid chain; its full sequence is Cobyric acid synthase (513 aa).

Residues 270 to 470 (RLRIAIVAYP…THGLFESPAV (201 aa)) form the GATase cobBQ-type domain. The active-site Nucleophile is cysteine 351. The active site involves histidine 462.

The protein belongs to the CobB/CobQ family. CobQ subfamily.

Its pathway is cofactor biosynthesis; adenosylcobalamin biosynthesis. In terms of biological role, catalyzes amidations at positions B, D, E, and G on adenosylcobyrinic A,C-diamide. NH(2) groups are provided by glutamine, and one molecule of ATP is hydrogenolyzed for each amidation. The sequence is that of Cobyric acid synthase from Leptothrix cholodnii (strain ATCC 51168 / LMG 8142 / SP-6) (Leptothrix discophora (strain SP-6)).